Here is a 197-residue protein sequence, read N- to C-terminus: Imidazoleglycerol-phosphate dehydratase (197 aa).

This sequence belongs to the imidazoleglycerol-phosphate dehydratase family.

It localises to the cytoplasm. It catalyses the reaction D-erythro-1-(imidazol-4-yl)glycerol 3-phosphate = 3-(imidazol-4-yl)-2-oxopropyl phosphate + H2O. It functions in the pathway amino-acid biosynthesis; L-histidine biosynthesis; L-histidine from 5-phospho-alpha-D-ribose 1-diphosphate: step 6/9. The polypeptide is Imidazoleglycerol-phosphate dehydratase (Rhodopseudomonas palustris (strain TIE-1)).